The chain runs to 109 residues: Nucleoid-associated protein Ping_2276 (109 aa).

This sequence belongs to the YbaB/EbfC family. As to quaternary structure, homodimer.

The protein resides in the cytoplasm. The protein localises to the nucleoid. Its function is as follows. Binds to DNA and alters its conformation. May be involved in regulation of gene expression, nucleoid organization and DNA protection. The chain is Nucleoid-associated protein Ping_2276 from Psychromonas ingrahamii (strain DSM 17664 / CCUG 51855 / 37).